The following is a 406-amino-acid chain: Arginine biosynthesis bifunctional protein ArgJ (406 aa).

Residues T156, K182, T193, E279, N401, and T406 each coordinate substrate. T193 functions as the Nucleophile in the catalytic mechanism.

It belongs to the ArgJ family. Heterotetramer of two alpha and two beta chains.

It is found in the cytoplasm. The catalysed reaction is N(2)-acetyl-L-ornithine + L-glutamate = N-acetyl-L-glutamate + L-ornithine. It catalyses the reaction L-glutamate + acetyl-CoA = N-acetyl-L-glutamate + CoA + H(+). The protein operates within amino-acid biosynthesis; L-arginine biosynthesis; L-ornithine and N-acetyl-L-glutamate from L-glutamate and N(2)-acetyl-L-ornithine (cyclic): step 1/1. It participates in amino-acid biosynthesis; L-arginine biosynthesis; N(2)-acetyl-L-ornithine from L-glutamate: step 1/4. Feedback inhibition by L-arginine. Its function is as follows. Catalyzes two activities which are involved in the cyclic version of arginine biosynthesis: the synthesis of N-acetylglutamate from glutamate and acetyl-CoA as the acetyl donor, and of ornithine by transacetylation between N(2)-acetylornithine and glutamate. The protein is Arginine biosynthesis bifunctional protein ArgJ of Bacillus amyloliquefaciens (Bacillus velezensis).